The chain runs to 593 residues: Polyphenol oxidase, chloroplastic (593 aa).

The span at 1 to 13 (MTSLSPPVVTTPT) shows a compositional bias: low complexity. Residues 1–34 (MTSLSPPVVTTPTVPNPATKPLSPFSQNNSQVSL) form a disordered region. Residues 1–89 (MTSLSPPVVT…GMGTDPFAFA (89 aa)) constitute a chloroplast transit peptide. Residues 24–34 (PFSQNNSQVSL) are compositionally biased toward polar residues. Disulfide bonds link Cys100–Cys115 and Cys114–Cys176. Residues His175, His196, His205, His327, His331, and His361 each contribute to the Cu cation site. The segment at residues 179–196 (CDGAYDQVGFPELELQIH) is a cross-link (2'-(S-cysteinyl)-histidine (Cys-His)).

The protein belongs to the tyrosinase family. It depends on Cu(2+) as a cofactor.

Its subcellular location is the plastid. It localises to the chloroplast thylakoid lumen. The catalysed reaction is 2 catechol + O2 = 2 1,2-benzoquinone + 2 H2O. Its function is as follows. Catalyzes the oxidation of mono- and o-diphenols to o-diquinones. This is Polyphenol oxidase, chloroplastic from Malus domestica (Apple).